Reading from the N-terminus, the 131-residue chain is Antitoxin MqsA (131 aa).

Zn(2+) contacts are provided by Cys3, Cys6, Cys37, and Cys40. The region spanning 74–127 (IVKVRKKLSLTQKEASEIFGGGVNAFSRYEKGNAQPHPSTIKLLRVLDKHPELL) is the HTH cro/C1-type domain. The H-T-H motif DNA-binding region spans 85-104 (QKEASEIFGGGVNAFSRYEK).

As to quaternary structure, homodimer. Crystallizes as a heterotetramer with MqsA, MqsR-MqsA(2)-MqsR. Purifies as a probable heterohexamer of 2 MqsR dimers and 1 MqsA dimer. Binds promoter DNA as a dimer. When the 2 dissociate the MsqR mRNA interferase becomes active. The cofactor is Zn(2+). Degraded in the presence of oxidative stress, maybe by the Lon and/or ClpX proteases.

Its function is as follows. Antitoxin component of a type II toxin-antitoxin (TA) system. Labile antitoxin that binds to the MqsR mRNA interferase toxin and neutralizes its endoribonuclease activity. Overexpression prevents MqsR-mediated cessation of cell growth and inhibition of cell proliferation. Initially reported to act as a cotranscription factor with MqsA. Following further experiments, the MqsR-MqsA complex does not bind DNA and all reported data are actually due to a small fraction of free MqsA alone binding DNA. Addition of MqsR to a preformed MqsA-promoter DNA complex causes dissociation of the MqsA-DNA complex, probably causing derepression of MqsA-repressed transcripts. MqsA binds to 2 palindromes in the promoter region of the mqsRA operon activating its transcription. Binds to other promoters, inducing mcbR and spy and repressing cspD among others. Binds to and represses the rpoS promoter, the master stress regulator, resulting in decreased cyclic-di-GMP, reduced stress resistance, increased cell motility and decreased biofilm formation; in these experiments 5 TA systems are missing (lacks MazEF, RelEB, ChpB, YoeB-YefM, YafQ-DinJ). An earlier study showed overexpression alone increases biofilm formation, perhaps by repressing cspD; in these experiments the 5 TA systems are present. Represses the csgD promoter. In the presence of stress, when this protein is degraded, the promoters it represses are derepressed, leading to biofilm formation. This TA system mediates cell growth during bile acid deoxycholate stress by degrading mRNA for probable deoxycholate-binding protein YgiS; bile acid detergents such as deoxycholate are important for host defense against bacterial growth in the gall bladder and duodenum. The protein is Antitoxin MqsA of Escherichia coli (strain K12).